Here is a 510-residue protein sequence, read N- to C-terminus: Lysine--tRNA ligase (510 aa).

Mg(2+) contacts are provided by Glu-420 and Glu-427.

It belongs to the class-II aminoacyl-tRNA synthetase family. As to quaternary structure, homodimer. It depends on Mg(2+) as a cofactor.

The protein resides in the cytoplasm. The enzyme catalyses tRNA(Lys) + L-lysine + ATP = L-lysyl-tRNA(Lys) + AMP + diphosphate. The protein is Lysine--tRNA ligase of Vibrio vulnificus (strain YJ016).